The primary structure comprises 244 residues: AA9 family lytic polysaccharide monooxygenase B (244 aa).

The first 19 residues, methionine 1–alanine 19, serve as a signal peptide directing secretion. Histidine 20 lines the Cu(2+) pocket. Tyrosine 39 is a binding site for (1,4-beta-D-glucosyl)n. Disulfide bonds link cysteine 68–cysteine 189 and cysteine 111–cysteine 115. Histidine 99 is a Cu(2+) binding site. The N-linked (GlcNAc...) asparagine glycan is linked to asparagine 152. Residues histidine 178 and glutamine 184 each contribute to the O2 site. Residue tyrosine 186 coordinates Cu(2+). 3 residues coordinate (1,4-beta-D-glucosyl)n: aspartate 224, tyrosine 226, and glutamate 229. A glycan (N-linked (GlcNAc...) asparagine) is linked at asparagine 233.

The protein belongs to the polysaccharide monooxygenase AA9 family. Cu(2+) serves as cofactor.

It is found in the secreted. It carries out the reaction [(1-&gt;4)-beta-D-glucosyl]n+m + reduced acceptor + O2 = 4-dehydro-beta-D-glucosyl-[(1-&gt;4)-beta-D-glucosyl]n-1 + [(1-&gt;4)-beta-D-glucosyl]m + acceptor + H2O.. In terms of biological role, lytic polysaccharide monooxygenase (LPMO) that depolymerizes crystalline and amorphous polysaccharides via the oxidation of scissile alpha- or beta-(1-4)-glycosidic bonds, yielding specifically C1 oxidation product. Catalysis by LPMOs requires the reduction of the active-site copper from Cu(II) to Cu(I) by a reducing agent and H(2)O(2) or O(2) as a cosubstrate. Displays catalytic activity on insoluble cellulose using I-beta microfibril model substrate. This is AA9 family lytic polysaccharide monooxygenase B from Heterobasidion irregulare (strain TC 32-1).